A 658-amino-acid polypeptide reads, in one-letter code: Exoribonuclease 2 (658 aa).

The 342-residue stretch at Arg-189–Leu-530 folds into the RNB domain. An S1 motif domain is found at Ala-576–Ile-658.

This sequence belongs to the RNR ribonuclease family. RNase II subfamily.

It is found in the cytoplasm. The enzyme catalyses Exonucleolytic cleavage in the 3'- to 5'-direction to yield nucleoside 5'-phosphates.. Functionally, involved in mRNA degradation. Hydrolyzes single-stranded polyribonucleotides processively in the 3' to 5' direction. This Actinobacillus pleuropneumoniae serotype 5b (strain L20) protein is Exoribonuclease 2.